We begin with the raw amino-acid sequence, 60 residues long: Large ribosomal subunit protein bL32 (60 aa).

The protein belongs to the bacterial ribosomal protein bL32 family.

The protein is Large ribosomal subunit protein bL32 of Synechococcus sp. (strain JA-3-3Ab) (Cyanobacteria bacterium Yellowstone A-Prime).